A 1009-amino-acid chain; its full sequence is Lateral signaling target protein 2 homolog (1009 aa).

Disordered stretches follow at residues 313–460 (PVGS…EEQL), 497–629 (ASED…KRCS), and 777–905 (MQRN…TATA). Low complexity-rich tracts occupy residues 327–348 (SSTP…SSSG), 364–398 (QRNN…TPTA), and 406–427 (PSHS…HPPA). A compositionally biased stretch (acidic residues) spans 430–458 (SDGDDEDEDEEEDEEEDELEDTEDDTDEE). Phosphoserine is present on S541. Positions 544–558 (SEPHRDQGETIKSTE) are enriched in basic and acidic residues. Low complexity predominate over residues 562–575 (QQQQQQEQQTLQSS). 2 stretches are compositionally biased toward basic residues: residues 576-601 (RQRH…HHST) and 609-627 (QPHH…GRKR). A compositionally biased stretch (low complexity) spans 780 to 798 (NNTIDNPSSSNTSSSSATT). S807 carries the phosphoserine modification. Residues 822-878 (VHQQEQEMQQQQDHQQQQHQHQVQVQLQRQRNNSVGSNTPSSASSTSSSSEQNSPVS) are compositionally biased toward low complexity. The segment at 917–977 (DGKAPRCMSC…VCRDCYVREV (61 aa)) adopts an FYVE-type zinc-finger fold. Zn(2+) is bound by residues C923, C926, C939, C942, C947, C950, C969, and C972.

The protein belongs to the lst-2 family.

In terms of biological role, negative regulator of epidermal growth factor receptor (EGFR) signaling. This Drosophila persimilis (Fruit fly) protein is Lateral signaling target protein 2 homolog.